Here is a 271-residue protein sequence, read N- to C-terminus: MATH domain and coiled-coil domain-containing protein At3g27040 (271 aa).

Residues Asp-7–Val-133 enclose the MATH domain. Positions Lys-230 to Arg-271 form a coiled coil.

In Arabidopsis thaliana (Mouse-ear cress), this protein is MATH domain and coiled-coil domain-containing protein At3g27040.